Here is a 256-residue protein sequence, read N- to C-terminus: Imidazole glycerol phosphate synthase subunit HisF (256 aa).

Residues Asp12 and Asp131 contribute to the active site.

This sequence belongs to the HisA/HisF family. In terms of assembly, heterodimer of HisH and HisF.

Its subcellular location is the cytoplasm. It carries out the reaction 5-[(5-phospho-1-deoxy-D-ribulos-1-ylimino)methylamino]-1-(5-phospho-beta-D-ribosyl)imidazole-4-carboxamide + L-glutamine = D-erythro-1-(imidazol-4-yl)glycerol 3-phosphate + 5-amino-1-(5-phospho-beta-D-ribosyl)imidazole-4-carboxamide + L-glutamate + H(+). It functions in the pathway amino-acid biosynthesis; L-histidine biosynthesis; L-histidine from 5-phospho-alpha-D-ribose 1-diphosphate: step 5/9. Functionally, IGPS catalyzes the conversion of PRFAR and glutamine to IGP, AICAR and glutamate. The HisF subunit catalyzes the cyclization activity that produces IGP and AICAR from PRFAR using the ammonia provided by the HisH subunit. The chain is Imidazole glycerol phosphate synthase subunit HisF from Thermobifida fusca (strain YX).